Here is a 146-residue protein sequence, read N- to C-terminus: Acidic phospholipase A2 S8-51 (146 aa).

A signal peptide spans 1–19 (MYPAHLLVLLAVCVSLLGA). Residues 20–27 (ASIPPQPL) constitute a propeptide that is removed on maturation. Intrachain disulfides connect Cys-38–Cys-98, Cys-54–Cys-145, Cys-56–Cys-72, Cys-71–Cys-126, Cys-78–Cys-119, Cys-87–Cys-112, and Cys-105–Cys-117. 3 residues coordinate Ca(2+): Tyr-55, Gly-57, and Gly-59. His-75 is an active-site residue. Residue Asp-76 participates in Ca(2+) binding. Residue Asp-120 is part of the active site.

The protein belongs to the phospholipase A2 family. Group I subfamily. D49 sub-subfamily. Ca(2+) is required as a cofactor. As to expression, expressed by the venom gland.

It localises to the secreted. It carries out the reaction a 1,2-diacyl-sn-glycero-3-phosphocholine + H2O = a 1-acyl-sn-glycero-3-phosphocholine + a fatty acid + H(+). Functionally, snake venom phospholipase A2 (PLA2) that inhibits collagen-induced platelet aggregation. PLA2 catalyzes the calcium-dependent hydrolysis of the 2-acyl groups in 3-sn-phosphoglycerides. This Austrelaps superbus (Lowland copperhead snake) protein is Acidic phospholipase A2 S8-51.